Here is a 165-residue protein sequence, read N- to C-terminus: Xanthine-guanine phosphoribosyltransferase (165 aa).

Residues R41–G42 and D98–T106 contribute to the 5-phospho-alpha-D-ribose 1-diphosphate site. Residue D99 participates in Mg(2+) binding. 2 residues coordinate guanine: D102 and I145. Xanthine is bound by residues D102 and I145. GMP is bound by residues D102–T106 and W144–I145.

This sequence belongs to the purine/pyrimidine phosphoribosyltransferase family. XGPT subfamily. Homotetramer. Mg(2+) is required as a cofactor.

Its subcellular location is the cell inner membrane. The catalysed reaction is GMP + diphosphate = guanine + 5-phospho-alpha-D-ribose 1-diphosphate. The enzyme catalyses XMP + diphosphate = xanthine + 5-phospho-alpha-D-ribose 1-diphosphate. It carries out the reaction IMP + diphosphate = hypoxanthine + 5-phospho-alpha-D-ribose 1-diphosphate. Its pathway is purine metabolism; GMP biosynthesis via salvage pathway; GMP from guanine: step 1/1. It functions in the pathway purine metabolism; XMP biosynthesis via salvage pathway; XMP from xanthine: step 1/1. Functionally, purine salvage pathway enzyme that catalyzes the transfer of the ribosyl-5-phosphate group from 5-phospho-alpha-D-ribose 1-diphosphate (PRPP) to the N9 position of the 6-oxopurines guanine and xanthine to form the corresponding ribonucleotides GMP (guanosine 5'-monophosphate) and XMP (xanthosine 5'-monophosphate), with the release of PPi. To a lesser extent, also acts on hypoxanthine. This is Xanthine-guanine phosphoribosyltransferase from Rhizobium meliloti (strain 1021) (Ensifer meliloti).